Here is a 716-residue protein sequence, read N- to C-terminus: Mitogen-activated protein kinase kinase kinase 5 (716 aa).

Residues 1–27 (MRWLPQISFSSPSSSPSSSLKPVASYS) show a composition bias toward low complexity. Disordered stretches follow at residues 1–42 (MRWL…DRFH), 74–98 (ASTSSSTFDSGLTRSPSAFTAVPRS), 119–180 (AANA…YWVN), and 238–302 (YDIT…VTNG). Basic and acidic residues predominate over residues 31–40 (DPDRNQDRDR). A compositionally biased stretch (polar residues) spans 75–91 (STSSSTFDSGLTRSPSA). A compositionally biased stretch (basic and acidic residues) spans 124 to 137 (GLDDRDRDPERLIS). 3 stretches are compositionally biased toward polar residues: residues 138–150 (DRTSSGPPLTSVN), 162–173 (ENSSYQDFSPRN), and 242–251 (AFSTDNSPIH). Low complexity predominate over residues 263–273 (RSPQPSRPSSP). In terms of domain architecture, Protein kinase spans 346-607 (WKKGKLIGRG…ASMLLEHRFL (262 aa)). Residues 352 to 360 (IGRGTFGSV) and K375 contribute to the ATP site. Catalysis depends on D472, which acts as the Proton acceptor. Over residues 610–633 (SLQPTSPSNSDVSQLFNGMNITEP) the composition is skewed to polar residues. The disordered stretch occupies residues 610–716 (SLQPTSPSNS…RRTGVTSDHL (107 aa)). 2 positions are modified to phosphoserine; by PBL27: S617 and S622. The segment covering 634–648 (SSRREKPNFKLDQVP) has biased composition (basic and acidic residues). Composition is skewed to polar residues over residues 652 to 661 (NMTSSESESG) and 674 to 685 (LTGTVNRLSPRS). Residues S658 and S660 each carry the phosphoserine; by PBL27 modification. A Phosphothreonine; by PBL27 modification is found at T677. Residue S685 is modified to Phosphoserine; by PBL27. Residues 703 to 716 (SSDRRRTGVTSDHL) are compositionally biased toward basic and acidic residues.

It belongs to the protein kinase superfamily. STE Ser/Thr protein kinase family. MAP kinase kinase kinase subfamily. Interacts with PBL27 at the plasma membrane; disassociation is induced by chitin perception by the CERK1 complex. Interacts with MKK2, MKK4, and MKK5 mainly in the cytosol. Phosphorylated by PBL27 during chitin-mediated signaling in a CERK1-dependent manner. Mostly expressed in flower buds. Also present in pollen, roots, leaves and seedlings, and, at low levels, in stems and immature siliques.

The protein localises to the cell membrane. It is found in the cytoplasm. Its subcellular location is the cytosol. It catalyses the reaction L-seryl-[protein] + ATP = O-phospho-L-seryl-[protein] + ADP + H(+). The catalysed reaction is L-threonyl-[protein] + ATP = O-phospho-L-threonyl-[protein] + ADP + H(+). Functionally, mitogen-activated protein kinase (MAPK) involved in the transduction of signal between the host cell surface chitin receptor complex CERK1-LYK5 and the intracellular MAPK cascade that leads to chitin-induced immunity. Phosphorylates and activates MAPK targets (e.g. MKK4, MKK5, and possibly MKK2) when phosphorylated by PBL27 after elicitation by chitin. Required for resistance to the fungus A.brassicicola. The chain is Mitogen-activated protein kinase kinase kinase 5 from Arabidopsis thaliana (Mouse-ear cress).